The following is a 488-amino-acid chain: Ribulose bisphosphate carboxylase large chain (488 aa).

The substrate site is built by N127 and T177. Residue K179 is the Proton acceptor of the active site. K181 contributes to the substrate binding site. Mg(2+)-binding residues include K205, D207, and E208. N6-carboxylysine is present on K205. H297 acts as the Proton acceptor in catalysis. Residues R298, H330, and S382 each contribute to the substrate site.

It belongs to the RuBisCO large chain family. Type I subfamily. As to quaternary structure, heterohexadecamer of 8 large chains and 8 small chains. It depends on Mg(2+) as a cofactor.

The protein localises to the plastid. Its subcellular location is the chloroplast. It carries out the reaction 2 (2R)-3-phosphoglycerate + 2 H(+) = D-ribulose 1,5-bisphosphate + CO2 + H2O. The catalysed reaction is D-ribulose 1,5-bisphosphate + O2 = 2-phosphoglycolate + (2R)-3-phosphoglycerate + 2 H(+). RuBisCO catalyzes two reactions: the carboxylation of D-ribulose 1,5-bisphosphate, the primary event in carbon dioxide fixation, as well as the oxidative fragmentation of the pentose substrate in the photorespiration process. Both reactions occur simultaneously and in competition at the same active site. This chain is Ribulose bisphosphate carboxylase large chain, found in Gracilaria tenuistipitata var. liui (Red alga).